We begin with the raw amino-acid sequence, 353 residues long: Protein CYTOKININ-RESPONSIVE GATA TRANSCRIPTION FACTOR 1 (353 aa).

Residues 137–144 (IRKGAATD) carry the Nuclear localization signal 1 motif. Residues 142-166 (ATDPEGGAVRKPRRRAQAHQDESQQ) form a disordered region. The GATA-type zinc finger occupies 178–203 (CSDCNTTKTPLWRSGPCGPKSLCNAC). The short motif at 244-251 (EKRAADVD) is the Nuclear localization signal 2 element.

This sequence belongs to the type IV zinc-finger family. Class B subfamily. In terms of tissue distribution, mostly expressed in leaves and stems, and, at low levels, in roots.

Its subcellular location is the nucleus. Its function is as follows. Transcriptional regulator that specifically binds 5'-GATA-3' or 5'-GAT-3' motifs within gene promoters. Influences the expression of nuclear encoded chloroplast-targeted genes. Regulates chloroplast development and promotes chlorophyll accumulation. Modulates plant architecture (e.g. height, length and width of leaf blades, and flowering tillers production) and represses tillering, probably by modulating number of cells. Promotes senescence. Involved in grain filling, panicle development and starch production. This chain is Protein CYTOKININ-RESPONSIVE GATA TRANSCRIPTION FACTOR 1, found in Oryza sativa subsp. japonica (Rice).